The sequence spans 817 residues: Cargo-transport protein YPP1 (817 aa).

It belongs to the YPP1 family. As to quaternary structure, interacts with STT4 and ribosomes.

Its subcellular location is the cytoplasmic granule. The protein localises to the cell membrane. Involved in endocytosis. This Saccharomyces cerevisiae (strain YJM789) (Baker's yeast) protein is Cargo-transport protein YPP1 (YPP1).